The following is a 336-amino-acid chain: MKKNTLFLGLVFIGILTFLVNLLAKTPFALNANLSALTIAILLGILFGNTFYPKISQYTAQGVIFAKGTLLRLGIILYGFRLTLQDISNVGINAIATDTIMLISTFLLTLWLGIRYLKMDKQIVYLTAGGCSICGAAAIMSMQPVTKAESHHVSIAVAVIVIFGTISMFLYPLMYPYLATWLNEHQFGIYIGSSVHEVAQVYAAGGNISPAVADTAVISKMIRVMMLAPFLLLVSWLLTKQNDQAKTTNISIPWFAFLFILMAVINSFSLIPAHIVAWIVEIDSLLLIAAMTALGLTTHISAIKQAGIKPLILGALVLCWLVIGGFFVNVGISQLF.

The next 10 helical transmembrane spans lie at 5-23 (TLFLGLVFIGILTFLVNLL), 30-52 (LNANLSALTIAILLGILFGNTFY), 62-84 (GVIFAKGTLLRLGIILYGFRLTL), 91-113 (GINAIATDTIMLISTFLLTLWLG), 123-140 (IVYLTAGGCSICGAAAIM), 153-175 (VSIAVAVIVIFGTISMFLYPLMY), 221-238 (MIRVMMLAPFLLLVSWLL), 250-271 (ISIPWFAFLFILMAVINSFSLI), 275-297 (IVAWIVEIDSLLLIAAMTALGLT), and 310-332 (PLILGALVLCWLVIGGFFVNVGI).

It belongs to the UPF0324 family.

The protein localises to the cell membrane. The polypeptide is UPF0324 membrane protein PM1461 (Pasteurella multocida (strain Pm70)).